We begin with the raw amino-acid sequence, 314 residues long: Olfactory receptor 5P6 (314 aa).

Topologically, residues 1 to 28 are extracellular; it reads MAFQEDGNHTAVTEFVLFGLTDDPVLRV. Asn-8 carries an N-linked (GlcNAc...) asparagine glycan. The chain crosses the membrane as a helical span at residues 29 to 49; it reads ILFIIFLCIYLVTVSGNLSTI. The Cytoplasmic portion of the chain corresponds to 50 to 57; the sequence is LLIRVSSQ. A helical transmembrane segment spans residues 58 to 78; it reads LHHPMYFFLSHLAFADIGYSS. At 79 to 102 the chain is on the extracellular side; that stretch reads SVTPNMLVNFLVERHTISYIGCAI. A disulfide bridge connects residues Cys-100 and Cys-192. The helical transmembrane segment at 103–123 threads the bilayer; sequence QLGSVVFFGSSECFILAAMAY. Over 124–136 the chain is Cytoplasmic; that stretch reads DRFMAICNPLLYS. Residues 137–157 form a helical membrane-spanning segment; that stretch reads TKMSTQVCVQLLLIAYIGGFL. Residues 158-199 are Extracellular-facing; it reads NTWSFTICFYSLVFCGPNGVNHFFCDFAPLIELSCSDVSVPA. A helical transmembrane segment spans residues 200–220; sequence TVPSFTAGSIIVVTVIVIAIS. Over 221–240 the chain is Cytoplasmic; that stretch reads YIYILITILKMHSTEGRQKA. Residues 241–261 form a helical membrane-spanning segment; the sequence is FSTCTSHLTAVTLFYGTITFI. Over 262 to 274 the chain is Extracellular; sequence YVMPKSSFSTDQN. Residues 275–295 traverse the membrane as a helical segment; it reads KVVSVFYMVVIPMLNPLIYSL. Topologically, residues 296 to 314 are cytoplasmic; it reads RNNEIKGALKRQIGRKIFS.

The protein belongs to the G-protein coupled receptor 1 family.

It localises to the cell membrane. In terms of biological role, potential odorant receptor. The sequence is that of Olfactory receptor 5P6 from Mus musculus (Mouse).